The following is a 208-amino-acid chain: Uracil phosphoribosyltransferase (208 aa).

5-phospho-alpha-D-ribose 1-diphosphate is bound by residues Arg-78, Arg-103, and 130–138 (DPMLATGGT). Residues Ile-193 and 198-200 (GDA) each bind uracil. Asp-199 provides a ligand contact to 5-phospho-alpha-D-ribose 1-diphosphate.

This sequence belongs to the UPRTase family. Mg(2+) is required as a cofactor.

The catalysed reaction is UMP + diphosphate = 5-phospho-alpha-D-ribose 1-diphosphate + uracil. The protein operates within pyrimidine metabolism; UMP biosynthesis via salvage pathway; UMP from uracil: step 1/1. Allosterically activated by GTP. Its function is as follows. Catalyzes the conversion of uracil and 5-phospho-alpha-D-ribose 1-diphosphate (PRPP) to UMP and diphosphate. This Nitratidesulfovibrio vulgaris (strain ATCC 29579 / DSM 644 / CCUG 34227 / NCIMB 8303 / VKM B-1760 / Hildenborough) (Desulfovibrio vulgaris) protein is Uracil phosphoribosyltransferase.